We begin with the raw amino-acid sequence, 354 residues long: Rhodopsin (354 aa).

Residues 1 to 36 (MNGTEGPYFYIPMVNTTGIVRSPYDYPQYYLVNPAA) lie on the Extracellular side of the membrane. Residues asparagine 2 and asparagine 15 are each glycosylated (N-linked (GlcNAc...) asparagine). The helical transmembrane segment at 37 to 61 (YAALGAYMFFLILVGFPINFLTLYV) threads the bilayer. The Cytoplasmic portion of the chain corresponds to 62–73 (TIEHKKLRTPLN). The helical transmembrane segment at 74-96 (YILLNLAVANLFMVFGGFTTTMY) threads the bilayer. Residues 97–110 (TSMHGYFVLGRLGC) are Extracellular-facing. Cysteine 110 and cysteine 187 are oxidised to a cystine. Residues 111-133 (NLEGFFATLGGEIALWSLVVLAV) traverse the membrane as a helical segment. The short motif at 134–136 (ERW) is the 'Ionic lock' involved in activated form stabilization element. At 134-152 (ERWMVVCKPISNFRFGENH) the chain is on the cytoplasmic side. The helical transmembrane segment at 153–173 (AIMGLAMTWLMASACAVPPLV) threads the bilayer. The Extracellular portion of the chain corresponds to 174-202 (GWSRYIPEGMQCSCGVDYYTRAEGFNNES). N-linked (GlcNAc...) asparagine glycosylation occurs at asparagine 200. The chain crosses the membrane as a helical span at residues 203–224 (FVVYMFCCHFMIPLIIVFFCYG). At 225 to 252 (RLLCAVKEAAAAQQESETTQRAEREVTR) the chain is on the cytoplasmic side. A helical transmembrane segment spans residues 253-274 (MVVIMVIAFLVCWLPYASVAWW). The Extracellular portion of the chain corresponds to 275–286 (IFTHQGSEFGPV). Residues 287–308 (FMTIPAFFAKSSSIYNPMIYIC) form a helical membrane-spanning segment. Lysine 296 is modified (N6-(retinylidene)lysine). Over 309–354 (MNKQFRNCMITTLCCGKNPFEEEEGASSTASKTEASSVSSSSVSPA) the chain is Cytoplasmic. S-palmitoyl cysteine attachment occurs at residues cysteine 322 and cysteine 323. The tract at residues 329-354 (EEEEGASSTASKTEASSVSSSSVSPA) is disordered. A compositionally biased stretch (low complexity) spans 334-354 (ASSTASKTEASSVSSSSVSPA).

This sequence belongs to the G-protein coupled receptor 1 family. Opsin subfamily. Post-translationally, phosphorylated on some or all of the serine and threonine residues present in the C-terminal region. In terms of processing, contains one covalently linked retinal chromophore.

Its subcellular location is the membrane. The protein localises to the cell projection. It is found in the cilium. The protein resides in the photoreceptor outer segment. Its function is as follows. Photoreceptor required for image-forming vision at low light intensity. While most salt water fish species use retinal as chromophore, most freshwater fish use 3-dehydroretinal, or a mixture of retinal and 3-dehydroretinal. Light-induced isomerization of 11-cis to all-trans retinal triggers a conformational change that activates signaling via G-proteins. Subsequent receptor phosphorylation mediates displacement of the bound G-protein alpha subunit by arrestin and terminates signaling. The chain is Rhodopsin (rho) from Mullus surmuletus (Striped red mullet).